We begin with the raw amino-acid sequence, 334 residues long: Phosphoribosylformylglycinamidine cyclo-ligase (334 aa).

It belongs to the AIR synthase family.

It is found in the cytoplasm. It catalyses the reaction 2-formamido-N(1)-(5-O-phospho-beta-D-ribosyl)acetamidine + ATP = 5-amino-1-(5-phospho-beta-D-ribosyl)imidazole + ADP + phosphate + H(+). It participates in purine metabolism; IMP biosynthesis via de novo pathway; 5-amino-1-(5-phospho-D-ribosyl)imidazole from N(2)-formyl-N(1)-(5-phospho-D-ribosyl)glycinamide: step 2/2. The chain is Phosphoribosylformylglycinamidine cyclo-ligase from Pyrococcus horikoshii (strain ATCC 700860 / DSM 12428 / JCM 9974 / NBRC 100139 / OT-3).